A 356-amino-acid chain; its full sequence is Heat-inducible transcription repressor HrcA (356 aa).

The protein belongs to the HrcA family.

Negative regulator of class I heat shock genes (grpE-dnaK-dnaJ and groELS operons). Prevents heat-shock induction of these operons. The sequence is that of Heat-inducible transcription repressor HrcA from Brucella abortus (strain S19).